Reading from the N-terminus, the 134-residue chain is Large-conductance mechanosensitive channel (134 aa).

2 consecutive transmembrane segments (helical) span residues 10–30 (FAMRGNVVDLAVGIIIGGAFG) and 76–96 (GAFLQTIVDFVIIAFSIFVVI).

It belongs to the MscL family. In terms of assembly, homopentamer.

The protein localises to the cell inner membrane. Channel that opens in response to stretch forces in the membrane lipid bilayer. May participate in the regulation of osmotic pressure changes within the cell. The polypeptide is Large-conductance mechanosensitive channel (Prosthecochloris aestuarii (strain DSM 271 / SK 413)).